The following is a 320-amino-acid chain: MKSVRGFASATVGNVACGFDILGFAITEPGDEVILTRSERKHTGCPVTISSISGDGGKLPLDPRKNTSSFVVLKFLEHIRTHKGQDCTGHISLELKKHLPLSSGMGSSAASAAAALAAANELLGRPCTKMELVHFAIEGERVACGSAHADNAAPAILGNFVLIRSYTPLDLIVIPPPEKLFCSLVHPHTELRTSFARSVLPTDITLKDATRQWGNVGALVAGLLTSDYALVGRSLVDVVAEPKRAPLIPGFAEVKEAALNAGALGCSIAGSGPSIFAFSDSAETAHAAGEAMQKAFLASKKSLKSDMWVSPICREGARIL.

100-110 (PLSSGMGSSAA) is an ATP binding site.

The protein belongs to the GHMP kinase family. Homoserine kinase subfamily.

The protein resides in the cytoplasm. The enzyme catalyses L-homoserine + ATP = O-phospho-L-homoserine + ADP + H(+). It functions in the pathway amino-acid biosynthesis; L-threonine biosynthesis; L-threonine from L-aspartate: step 4/5. Catalyzes the ATP-dependent phosphorylation of L-homoserine to L-homoserine phosphate. In Chlorobium phaeovibrioides (strain DSM 265 / 1930) (Prosthecochloris vibrioformis (strain DSM 265)), this protein is Homoserine kinase.